A 46-amino-acid chain; its full sequence is Viscotoxin-1-PS (46 aa).

3 disulfides stabilise this stretch: cysteine 3–cysteine 40, cysteine 4–cysteine 32, and cysteine 16–cysteine 26.

The protein belongs to the plant thionin (TC 1.C.44) family.

It is found in the secreted. Functionally, thionins are small plant proteins which are toxic to animal cells. They seem to exert their toxic effect at the level of the cell membrane. Their precise function is not known. This Viscum album (European mistletoe) protein is Viscotoxin-1-PS (THI2.4).